The primary structure comprises 152 residues: UPF0178 protein SAR0734 (152 aa).

This sequence belongs to the UPF0178 family.

The protein is UPF0178 protein SAR0734 of Staphylococcus aureus (strain MRSA252).